The following is a 367-amino-acid chain: CST complex subunit STN1 (367 aa).

The segment at residues 56-154 (VEILGTVIGR…EIRVTTYYKV (99 aa)) is a DNA-binding region (OB). Winged helix-turn-helix (wHTH) stretches follow at residues 190-294 (RAFS…YVTR) and 295-367 (EDKE…YTAF).

It belongs to the STN1 family. Component of the CST complex, composed of TEN1, CTC1 and STN1. Interacts with TEN1 and CTC1; the interaction is direct. Interacts with ACD/TPP1.

It localises to the nucleus. The protein localises to the chromosome. It is found in the telomere. Its function is as follows. Component of the CST complex, a complex that binds to single-stranded DNA and is required to protect telomeres from DNA degradation. The CST complex binds single-stranded DNA with high affinity in a sequence-independent manner, while isolated subunits bind DNA with low affinity by themselves. In addition to telomere protection, the CST complex has probably a more general role in DNA metabolism at non-telomeric sites. The sequence is that of CST complex subunit STN1 from Ailuropoda melanoleuca (Giant panda).